We begin with the raw amino-acid sequence, 184 residues long: Thymidine kinase (184 aa).

ATP-binding positions include 9-16 and 82-85; these read AAMNSGKS and DEAQ. The Proton acceptor role is filled by glutamate 83. Residues cysteine 140, cysteine 142, cysteine 177, and cysteine 180 each coordinate Zn(2+).

The protein belongs to the thymidine kinase family. In terms of assembly, homotetramer.

It localises to the cytoplasm. The enzyme catalyses thymidine + ATP = dTMP + ADP + H(+). This chain is Thymidine kinase, found in Chromobacterium violaceum (strain ATCC 12472 / DSM 30191 / JCM 1249 / CCUG 213 / NBRC 12614 / NCIMB 9131 / NCTC 9757 / MK).